A 324-amino-acid chain; its full sequence is Acetyl-coenzyme A carboxylase carboxyl transferase subunit alpha (324 aa).

The 255-residue stretch at 37-291 folds into the CoA carboxyltransferase C-terminal domain; it reads KLERRLDKLK…QNFILQEWLR (255 aa).

The protein belongs to the AccA family. Acetyl-CoA carboxylase is a heterohexamer composed of biotin carboxyl carrier protein (AccB), biotin carboxylase (AccC) and two subunits each of ACCase subunit alpha (AccA) and ACCase subunit beta (AccD).

The protein resides in the cytoplasm. It carries out the reaction N(6)-carboxybiotinyl-L-lysyl-[protein] + acetyl-CoA = N(6)-biotinyl-L-lysyl-[protein] + malonyl-CoA. The protein operates within lipid metabolism; malonyl-CoA biosynthesis; malonyl-CoA from acetyl-CoA: step 1/1. In terms of biological role, component of the acetyl coenzyme A carboxylase (ACC) complex. First, biotin carboxylase catalyzes the carboxylation of biotin on its carrier protein (BCCP) and then the CO(2) group is transferred by the carboxyltransferase to acetyl-CoA to form malonyl-CoA. In Chlamydia caviae (strain ATCC VR-813 / DSM 19441 / 03DC25 / GPIC) (Chlamydophila caviae), this protein is Acetyl-coenzyme A carboxylase carboxyl transferase subunit alpha.